A 287-amino-acid chain; its full sequence is MAAPRNLTGDGGARQLVKDEESPAASSAAKGLLNDDSPTGKRTKSERFPLSRWEFAVFFTVFLVFTTGLFCIYLTMPAAEYGKLKVPRTISDLRLLKENLGSYASEYQARFILGYCSTYIFMQTFMIPGTIFMSLLAGALFGVVRGFVLVVLNATAGACSCFFLSKLVGRPLVNWLWPEKLRFFQAEIAKRRDRLLNYMLFLRITPTLPNLFINLSSPIVDIPFHVFFLATLVGLMPASYITVRAGLALGDLRSVKDLYDFKTLSVLFLIGSISIFPALLKRKRVYE.

The segment at 1–44 (MAAPRNLTGDGGARQLVKDEESPAASSAAKGLLNDDSPTGKRTK) is disordered. Serine 37 carries the post-translational modification Phosphoserine. A run of 5 helical transmembrane segments spans residues 55-75 (FAVF…IYLT), 124-144 (TFMI…FGVV), 147-167 (FVLV…LSKL), 218-238 (PIVD…LMPA), and 260-280 (DFKT…PALL).

It is found in the membrane. This is an uncharacterized protein from Arabidopsis thaliana (Mouse-ear cress).